The sequence spans 123 residues: Transmembrane protein 254 (123 aa).

N-acetylalanine is present on alanine 2. 3 helical membrane passes run 15-35 (LFWFTVITLSFGYYTWVVFWP), 61-81 (LCNGYWLAWLIHVGESLYAIV), and 95-115 (LLWFLQTFFFGIASLTILIAY).

The protein localises to the membrane. The chain is Transmembrane protein 254 (TMEM254) from Homo sapiens (Human).